The chain runs to 346 residues: Large ribosomal subunit protein uL3 (346 aa).

The segment at 324-346 (RPPKKKPPVERPQITYVSRESKQ) is disordered.

This sequence belongs to the universal ribosomal protein uL3 family. Part of the 50S ribosomal subunit. Forms a cluster with proteins L14 and L24e.

Its function is as follows. One of the primary rRNA binding proteins, it binds directly near the 3'-end of the 23S rRNA, where it nucleates assembly of the 50S subunit. The polypeptide is Large ribosomal subunit protein uL3 (Thermococcus kodakarensis (strain ATCC BAA-918 / JCM 12380 / KOD1) (Pyrococcus kodakaraensis (strain KOD1))).